The chain runs to 123 residues: Large ribosomal subunit protein eL8 (123 aa).

This sequence belongs to the eukaryotic ribosomal protein eL8 family. Part of the 50S ribosomal subunit. Probably part of the RNase P complex.

The protein localises to the cytoplasm. Functionally, multifunctional RNA-binding protein that recognizes the K-turn motif in ribosomal RNA, the RNA component of RNase P, box H/ACA, box C/D and box C'/D' sRNAs. The sequence is that of Large ribosomal subunit protein eL8 from Methanobrevibacter smithii (strain ATCC 35061 / DSM 861 / OCM 144 / PS).